Reading from the N-terminus, the 160-residue chain is Tic20 family protein (160 aa).

Transmembrane regions (helical) follow at residues 13–33 (FFSA…GGFL), 53–73 (FYYQ…MAVV), 87–107 (MQAI…AYVI), and 122–142 (NFAF…SVLG).

The protein belongs to the Tic20 family.

The protein localises to the cell membrane. This Synechocystis sp. (strain ATCC 27184 / PCC 6803 / Kazusa) protein is Tic20 family protein.